The chain runs to 342 residues: S-adenosylmethionine:tRNA ribosyltransferase-isomerase (342 aa).

The protein belongs to the QueA family. In terms of assembly, monomer.

The protein localises to the cytoplasm. The enzyme catalyses 7-aminomethyl-7-carbaguanosine(34) in tRNA + S-adenosyl-L-methionine = epoxyqueuosine(34) in tRNA + adenine + L-methionine + 2 H(+). It functions in the pathway tRNA modification; tRNA-queuosine biosynthesis. Transfers and isomerizes the ribose moiety from AdoMet to the 7-aminomethyl group of 7-deazaguanine (preQ1-tRNA) to give epoxyqueuosine (oQ-tRNA). This is S-adenosylmethionine:tRNA ribosyltransferase-isomerase from Listeria welshimeri serovar 6b (strain ATCC 35897 / DSM 20650 / CCUG 15529 / CIP 8149 / NCTC 11857 / SLCC 5334 / V8).